Consider the following 387-residue polypeptide: O-methyltransferase asqD (387 aa).

Residue Asp-252 coordinates S-adenosyl-L-methionine. His-294 (proton acceptor) is an active-site residue.

It belongs to the class I-like SAM-binding methyltransferase superfamily. Cation-independent O-methyltransferase family.

The protein operates within secondary metabolite biosynthesis. It functions in the pathway alkaloid biosynthesis. It participates in mycotoxin biosynthesis. Its function is as follows. O-methyltransferase; part of the gene cluster that mediates the biosynthesis of the aspoquinolone mycotoxins. The role of asqD within the aspoquinolone pathway has still to be determined. The first step of the pathway is catalyzed by the nonribosomal peptide synthetase asqK that condenses anthranilic acid and O-methyl-L-tyrosine to produce 4'-methoxycyclopeptin. 4'-methoxycyclopeptin is then converted to 4'-methoxydehydrocyclopeptin by the ketoglutarate-dependent dioxygenase asqJ. AsqJ also converts its first product 4'-methoxydehydrocyclopeptin to 4'-methoxycyclopenin. The following conversion of 4'-methoxycyclopenin into 4'-methoxyviridicatin is catalyzed by the cyclopenase asqI. 4'-methoxyviridicatin is the precursor of quinolone natural products, and is further converted to quinolinone B. The prenyltransferase asqH1 then catalyzes the canonical Friedel-Crafts alkylation of quinolinone B with dimethylallyl cation to yield dimethylallyl quinolone, which is subjected to FAD-dependent dehydrogenation by the FAD-linked oxidoreductase asqF to yield conjugated aryl diene. The delta(3') double bond then serves as the site of the second alkylation with DMAPP catalyzed by the prenyltransferase asqH2 to yield a carbenium ion intermediate, which can be attacked by H(2)O to yield a styrenyl quinolone containing a C3'-hydroxyprenyl chain. The FAD-dependent monooxygenase asqG performs epoxidation of the terminal C7'-C8' olefin. Finally, after dehydratation of the epoxide at C3 by asqC, the quinolone epoxide rearrangement protein asqO catalyzes an enzymatic 3-exo-tet cyclization to yield the cyclopropyl-THF ring system in aspoquinolone. This is O-methyltransferase asqD from Emericella nidulans (strain FGSC A4 / ATCC 38163 / CBS 112.46 / NRRL 194 / M139) (Aspergillus nidulans).